The primary structure comprises 83 residues: MGSTKTLVTCFLVIILAVSLPNNNVLASDARIEGFSFDNCNIRCSEDYWNDECNKDCLRAGFQKGGQCGSPCIPCPVKCCCQK.

Positions 1–27 are cleaved as a signal peptide; the sequence is MGSTKTLVTCFLVIILAVSLPNNNVLA. 4 cysteine pairs are disulfide-bonded: Cys-40/Cys-81, Cys-44/Cys-68, Cys-53/Cys-79, and Cys-57/Cys-80.

The protein belongs to the DEFL family.

The protein resides in the secreted. In Arabidopsis thaliana (Mouse-ear cress), this protein is Defensin-like protein 47.